The primary structure comprises 390 residues: Chorismate synthase (390 aa).

Arginine 48 contacts NADP(+). FMN contacts are provided by residues 126–128 (RAS), glycine 286, 301–305 (KPTSS), and arginine 328.

This sequence belongs to the chorismate synthase family. It depends on FMNH2 as a cofactor.

It carries out the reaction 5-O-(1-carboxyvinyl)-3-phosphoshikimate = chorismate + phosphate. The protein operates within metabolic intermediate biosynthesis; chorismate biosynthesis; chorismate from D-erythrose 4-phosphate and phosphoenolpyruvate: step 7/7. Its function is as follows. Catalyzes the anti-1,4-elimination of the C-3 phosphate and the C-6 proR hydrogen from 5-enolpyruvylshikimate-3-phosphate (EPSP) to yield chorismate, which is the branch point compound that serves as the starting substrate for the three terminal pathways of aromatic amino acid biosynthesis. This reaction introduces a second double bond into the aromatic ring system. In Sulfurisphaera tokodaii (strain DSM 16993 / JCM 10545 / NBRC 100140 / 7) (Sulfolobus tokodaii), this protein is Chorismate synthase.